We begin with the raw amino-acid sequence, 301 residues long: Transposase InsD for insertion element IS2D (301 aa).

The Integrase catalytic domain occupies 106 to 289; that stretch reads KPAVPPSKRA…SPREYLRQRA (184 aa).

In terms of biological role, involved in the transposition of the insertion sequence IS2. This chain is Transposase InsD for insertion element IS2D (insD2), found in Escherichia coli (strain K12).